The following is a 246-amino-acid chain: Transcription factor A, mitochondrial (246 aa).

A mitochondrion-targeting transit peptide spans 1-42; that stretch reads MAFLRSMWGVLSALGRSGAAVCIGCGSRLRSPFSFVYLPKCF. Positions 50 to 118 form a DNA-binding region, HMG box 1; that stretch reads PKKPVSSYLR…VYKEKISRFK (69 aa). S55, S56, and S61 each carry phosphoserine; by PKA. Position 122 is a phosphothreonine (T122). Positions 155–219 form a DNA-binding region, HMG box 2; that stretch reads PKRPRSAYNV…RYHNEMKSWE (65 aa). S160 bears the Phosphoserine; by PKA mark. Residues S193 and S195 each carry the phosphoserine modification.

In terms of assembly, monomer; binds DNA as a monomer. Homodimer. Component of the mitochondrial transcription initiation complex, composed at least of TFB2M, TFAM and POLRMT. In this complex TFAM recruits POLRMT to the promoter whereas TFB2M induces structural changes in POLRMT to enable promoter opening and trapping of the DNA non-template strand. Upon metabolic stress, forms a complex composed of FOXO3, SIRT3, TFAM and POLRMT. Interacts with TFB1M and TFB2M. Interacts with CLPX; this enhances DNA-binding. Phosphorylation by PKA within the HMG box 1 impairs DNA binding and promotes degradation by the AAA+ Lon protease.

The protein localises to the mitochondrion. Its subcellular location is the mitochondrion matrix. It localises to the mitochondrion nucleoid. Binds to the mitochondrial light strand promoter and functions in mitochondrial transcription regulation. Component of the mitochondrial transcription initiation complex, composed at least of TFB2M, TFAM and POLRMT that is required for basal transcription of mitochondrial DNA. In this complex, TFAM recruits POLRMT to a specific promoter whereas TFB2M induces structural changes in POLRMT to enable promoter opening and trapping of the DNA non-template strand. Required for accurate and efficient promoter recognition by the mitochondrial RNA polymerase. Promotes transcription initiation from the HSP1 and the light strand promoter by binding immediately upstream of transcriptional start sites. Is able to unwind DNA. Bends the mitochondrial light strand promoter DNA into a U-turn shape via its HMG boxes. Required for maintenance of normal levels of mitochondrial DNA. May play a role in organizing and compacting mitochondrial DNA. In Trachypithecus cristatus (Silvered leaf-monkey), this protein is Transcription factor A, mitochondrial.